Here is a 418-residue protein sequence, read N- to C-terminus: Aspartate aminotransferase 1 (418 aa).

Position 264 is an N6-(pyridoxal phosphate)lysine (K264).

The protein belongs to the class-I pyridoxal-phosphate-dependent aminotransferase family. As to quaternary structure, homodimer. It depends on pyridoxal 5'-phosphate as a cofactor. As to expression, nodules, roots, stems and leaves, in decreasing order of aspartate aminotransferase 1 concentration. Is the predominant aspartate aminotransferase isoenzyme in roots.

Its subcellular location is the cytoplasm. It catalyses the reaction L-aspartate + 2-oxoglutarate = oxaloacetate + L-glutamate. Important for the metabolism of amino acids and Krebs-cycle related organic acids. In plants, it is involved in nitrogen metabolism and in aspects of carbon and energy metabolism. In Medicago sativa (Alfalfa), this protein is Aspartate aminotransferase 1 (AAT-1).